The primary structure comprises 163 residues: 3-isopropylmalate dehydratase small subunit (163 aa).

This sequence belongs to the LeuD family. LeuD type 2 subfamily. As to quaternary structure, heterodimer of LeuC and LeuD.

The catalysed reaction is (2R,3S)-3-isopropylmalate = (2S)-2-isopropylmalate. Its pathway is amino-acid biosynthesis; L-leucine biosynthesis; L-leucine from 3-methyl-2-oxobutanoate: step 2/4. Its function is as follows. Catalyzes the isomerization between 2-isopropylmalate and 3-isopropylmalate, via the formation of 2-isopropylmaleate. In Endomicrobium trichonymphae, this protein is 3-isopropylmalate dehydratase small subunit.